Reading from the N-terminus, the 155-residue chain is Probable Brix domain-containing ribosomal biogenesis protein (155 aa).

The 155-residue stretch at 1–155 (MLITSSRKPS…KNYRKMVMSE (155 aa)) folds into the Brix domain.

In terms of biological role, probably involved in the biogenesis of the ribosome. The chain is Probable Brix domain-containing ribosomal biogenesis protein from Methanococcoides burtonii (strain DSM 6242 / NBRC 107633 / OCM 468 / ACE-M).